The primary structure comprises 369 residues: Queuine tRNA-ribosyltransferase (369 aa).

The active-site Proton acceptor is aspartate 89. Substrate contacts are provided by residues 89–93 (DSGGF), aspartate 142, glutamine 184, and glycine 211. The interval 242 to 248 (GGGSPEL) is RNA binding. The active-site Nucleophile is aspartate 261. Residues 266 to 270 (TRIAR) form an RNA binding; important for wobble base 34 recognition region. The Zn(2+) site is built by cysteine 299, cysteine 301, cysteine 304, and histidine 330.

This sequence belongs to the queuine tRNA-ribosyltransferase family. As to quaternary structure, homodimer. Within each dimer, one monomer is responsible for RNA recognition and catalysis, while the other monomer binds to the replacement base PreQ1. The cofactor is Zn(2+).

It catalyses the reaction 7-aminomethyl-7-carbaguanine + guanosine(34) in tRNA = 7-aminomethyl-7-carbaguanosine(34) in tRNA + guanine. Its pathway is tRNA modification; tRNA-queuosine biosynthesis. In terms of biological role, catalyzes the base-exchange of a guanine (G) residue with the queuine precursor 7-aminomethyl-7-deazaguanine (PreQ1) at position 34 (anticodon wobble position) in tRNAs with GU(N) anticodons (tRNA-Asp, -Asn, -His and -Tyr). Catalysis occurs through a double-displacement mechanism. The nucleophile active site attacks the C1' of nucleotide 34 to detach the guanine base from the RNA, forming a covalent enzyme-RNA intermediate. The proton acceptor active site deprotonates the incoming PreQ1, allowing a nucleophilic attack on the C1' of the ribose to form the product. After dissociation, two additional enzymatic reactions on the tRNA convert PreQ1 to queuine (Q), resulting in the hypermodified nucleoside queuosine (7-(((4,5-cis-dihydroxy-2-cyclopenten-1-yl)amino)methyl)-7-deazaguanosine). In Thermotoga sp. (strain RQ2), this protein is Queuine tRNA-ribosyltransferase.